The sequence spans 348 residues: Rhodopsin (348 aa).

Met-1 carries the post-translational modification N-acetylmethionine. Residues 1–36 (MNGTEGLNFYVPFSNKTGVVRSPFEYPQYYLAEPWQ) are Extracellular-facing. N-linked (GlcNAc...) asparagine glycosylation is found at Asn-2 and Asn-15. A helical membrane pass occupies residues 37 to 61 (FSVLAAYMFLLIVLGFPINFLTLYV). The Cytoplasmic segment spans residues 62 to 73 (TVQHKKLRTPLN). The helical transmembrane segment at 74 to 99 (YILLNLAVANLFMVFGGFTTTLYTSL) threads the bilayer. The Extracellular portion of the chain corresponds to 100–111 (HAYFVFGPTGCN). The cysteines at positions 110 and 187 are disulfide-linked. Residues 112 to 133 (LEGFFATLGGEIALWSLVVLAI) traverse the membrane as a helical segment. A 'Ionic lock' involved in activated form stabilization motif is present at residues 134–136 (ERY). Over 134–152 (ERYVVVCKPMSNFRFGENH) the chain is Cytoplasmic. Residues 153 to 173 (AIMGLALTWIMAMACAAAPLV) form a helical membrane-spanning segment. The Extracellular segment spans residues 174-202 (GWSRYIPEGMQCSCGIDYYTSRQEVNNES). Residue Glu-201 coordinates Zn(2+). Residues 203–227 (FVIYMFVVHFTIPLVIIFFCYGQLV) traverse the membrane as a helical segment. Residues 228–252 (FTVKEAAAQQQESATTQKAEKEVTR) lie on the Cytoplasmic side of the membrane. The chain crosses the membrane as a helical span at residues 253-274 (MVIIMVVAFLICWVPYASVAFY). The Extracellular portion of the chain corresponds to 275 to 286 (IFTHQGSDFGPI). Zn(2+) is bound at residue Gln-279. Residues 287–306 (FMTIPSFFAKSSSIYNPVIY) traverse the membrane as a helical segment. N6-(retinylidene)lysine is present on Lys-296. The Cytoplasmic portion of the chain corresponds to 307-348 (IMMNKQFRNCMLTTLCCGRNPLGDDEASTTASKTETSQVAPA). 2 S-palmitoyl cysteine lipidation sites follow: Cys-322 and Cys-323. Position 334 is a phosphoserine (Ser-334). A phosphothreonine mark is found at Thr-335 and Thr-336. Ser-338 bears the Phosphoserine mark. Residues Thr-340 and Thr-342 each carry the phosphothreonine modification. Position 343 is a phosphoserine (Ser-343).

Belongs to the G-protein coupled receptor 1 family. Opsin subfamily. In terms of assembly, homodimer. May form a complex composed of RHO, GRK1 and RCVRN in a Ca(2+)-dependent manner; RCVRN prevents the interaction between GRK1 and RHO. Interacts with GRK1. Interacts (phosphorylated form) with SAG. Interacts with GNAT1. Interacts with GNAT3. SAG and G-proteins compete for a common binding site. Interacts with PRCD; the interaction promotes PRCD stability. Forms a complex with ASAP1 and ARF4. Forms a complex with ASAP1, RAB11A, Rabin8/RAB3IP, ARF4 and RAB11FIP3; the complex regulates Golgi-to-cilia rhodopsin/RHO transport in photoreceptors. Contains one covalently linked retinal chromophore. Upon light absorption, the covalently bound 11-cis-retinal is converted to all-trans-retinal. After hydrolysis of the Schiff base and release of the covalently bound all-trans-retinal, active rhodopsin is regenerated by binding of a fresh molecule of 11-cis-retinal.

It is found in the membrane. It localises to the cell projection. The protein localises to the cilium. Its subcellular location is the photoreceptor outer segment. Photoreceptor required for image-forming vision at low light intensity. Light-induced isomerization of 11-cis to all-trans retinal triggers a conformational change that activates signaling via G-proteins. Signaling mediates the activation of phospholipase C. Subsequent receptor phosphorylation mediates displacement of the bound G-protein alpha subunit by arrestin and terminates signaling. This is Rhodopsin (RHO) from Tursiops truncatus (Atlantic bottle-nosed dolphin).